The primary structure comprises 196 residues: Protein GrpE (196 aa).

Residues 1–39 (MSSKEQKTPEGQAPEEIIMDQHEEIEAVEPEASAEQVDP) are disordered.

Belongs to the GrpE family. In terms of assembly, homodimer.

The protein localises to the cytoplasm. Functionally, participates actively in the response to hyperosmotic and heat shock by preventing the aggregation of stress-denatured proteins, in association with DnaK and GrpE. It is the nucleotide exchange factor for DnaK and may function as a thermosensor. Unfolded proteins bind initially to DnaJ; upon interaction with the DnaJ-bound protein, DnaK hydrolyzes its bound ATP, resulting in the formation of a stable complex. GrpE releases ADP from DnaK; ATP binding to DnaK triggers the release of the substrate protein, thus completing the reaction cycle. Several rounds of ATP-dependent interactions between DnaJ, DnaK and GrpE are required for fully efficient folding. The polypeptide is Protein GrpE (Escherichia coli (strain SMS-3-5 / SECEC)).